A 235-amino-acid chain; its full sequence is Small ribosomal subunit protein uS2c (235 aa).

This sequence belongs to the universal ribosomal protein uS2 family.

The protein resides in the plastid. The protein localises to the chloroplast. In Guillardia theta (Cryptophyte), this protein is Small ribosomal subunit protein uS2c (rps2).